A 128-amino-acid polypeptide reads, in one-letter code: Putative pre-16S rRNA nuclease (128 aa).

This sequence belongs to the YqgF nuclease family.

The protein localises to the cytoplasm. Functionally, could be a nuclease involved in processing of the 5'-end of pre-16S rRNA. In Campylobacter lari (strain RM2100 / D67 / ATCC BAA-1060), this protein is Putative pre-16S rRNA nuclease.